The primary structure comprises 107 residues: Iron-binding protein IscA (107 aa).

Cysteine 35, cysteine 99, and cysteine 101 together coordinate Fe cation.

It belongs to the HesB/IscA family. As to quaternary structure, homodimer; may form tetramers and higher multimers. Fe cation is required as a cofactor.

Functionally, is able to transfer iron-sulfur clusters to apo-ferredoxin. Multiple cycles of [2Fe2S] cluster formation and transfer are observed, suggesting that IscA acts catalytically. Recruits intracellular free iron so as to provide iron for the assembly of transient iron-sulfur cluster in IscU in the presence of IscS, L-cysteine and the thioredoxin reductase system TrxA/TrxB. This Photorhabdus laumondii subsp. laumondii (strain DSM 15139 / CIP 105565 / TT01) (Photorhabdus luminescens subsp. laumondii) protein is Iron-binding protein IscA.